A 1413-amino-acid polypeptide reads, in one-letter code: DNA-directed RNA polymerase subunit beta' (1413 aa).

4 residues coordinate Zn(2+): Cys-70, Cys-72, Cys-85, and Cys-88. Residues Asp-460, Asp-462, and Asp-464 each contribute to the Mg(2+) site. Residues Cys-819, Cys-893, Cys-900, and Cys-903 each coordinate Zn(2+).

The protein belongs to the RNA polymerase beta' chain family. The RNAP catalytic core consists of 2 alpha, 1 beta, 1 beta' and 1 omega subunit. When a sigma factor is associated with the core the holoenzyme is formed, which can initiate transcription. Mg(2+) is required as a cofactor. The cofactor is Zn(2+).

It carries out the reaction RNA(n) + a ribonucleoside 5'-triphosphate = RNA(n+1) + diphosphate. DNA-dependent RNA polymerase catalyzes the transcription of DNA into RNA using the four ribonucleoside triphosphates as substrates. The polypeptide is DNA-directed RNA polymerase subunit beta' (Burkholderia ambifaria (strain MC40-6)).